The following is a 1107-amino-acid chain: MFSRKKRELMKTPSLSKKSRAGSPAPQNDLTRKDVTDSSNDLASSPPSNSSPVSSGTLKRPSSLSRHASAAGIPLSSPRGKATKPASTPSPPESGEGPFIDVEDISQLLGDVARFAERLEKLRDVVQDEELKETRRPLAHECLGEALRLLRQVINKYPLLNTVETLTAAGTLISKVKGFHYESSIENDKRDFEKALESMAVCFSSTISEFLMGEVDSSTLLSLPPGDQSQSMESLCGGLSGGEGALPSAHEYVEAGGHLGEDVDVILQRSDGGVQAALLYAKNMAKYLKDLSSYIEKRTILEMEYAKGLQKLVNAYKGTLNQETHMPFQSIYSVALEQDLEHGHGILHTALTLQHQTFLQPINMRRQEHEKRRKEVKEQWQRAQRKLMEAESNLRKARQAYMQRSEEHERALYNATRAEEEQSHSGTRSLDKKRRAEEEAKNRAEEAMATYRTCIADAKTQKQELEDVKVNVLRQLQELIKQSDQILRSATISYYQSMHMQTAPLPVGFQMLCESSKLYDLGQQYASYVRQLGAVNEPETSYDFQPYTPQITWSPCIRARKSSFNSQDIPSSENKEISGEERGVERRGGRGHQVHKSWPTAITEGDPAVSSATVPAFPEKLHQPLSPTENVDQKRLSASFEQSINGLSGSLEVQNSTGPFRNIGLSRAALTHRLRKLRTPSKCRECNSYVYFQGAECEECSLACHKKCLETLAIQCGHKKLQGRLLLFGRDFSETALRSPDHIPFLIRKCVSEIEERALIMKGIYRVNGVKTRVEKLCQAFENGKELVELSQASPHDLSNVLKLYLRQLPEPLIPFRLYNGLMGLAKESLRGTETGKGPRLQDKGPNTETDVLSIVVQLKELLQDLPSENRTTLQYLVKHLCRVSEQEQLNKMSPSNLGIVFGPALMRPRPTDATVSLSSLVDYPHQARIVETLIIFYSTIFQEPVSNTDIGTGNSSSDDTASMQSRARLQVTVEEDLSELTPEYQIPVFKEPGASTVESDSESDGAEDIPGTWKPQTTRGHLTKEASVTSAEDIPYIEGEAQSESEEDRDQTQENLAENNTNQSNNVAVNGHCCVPHFHCHTQLPAIRMMHGKIYVSSADRRPHFV.

Positions 1–99 (MFSRKKRELM…SPPESGEGPF (99 aa)) are disordered. Low complexity predominate over residues 37–55 (DSSNDLASSPPSNSSPVSS). Positions 56 to 66 (GTLKRPSSLSR) are enriched in polar residues. Coiled coils occupy residues 103–132 (EDISQLLGDVARFAERLEKLRDVVQDEELK) and 363–485 (NMRR…QSDQ). In terms of domain architecture, F-BAR spans 261-524 (EDVDVILQRS…SSKLYDLGQQ (264 aa)). Composition is skewed to basic and acidic residues over residues 414-423 (NATRAEEEQS), 434-444 (RRAEEEAKNRA), and 573-588 (ENKEISGEERGVERRG). Disordered regions lie at residues 414–444 (NATRAEEEQSHSGTRSLDKKRRAEEEAKNRA) and 564–595 (FNSQDIPSSENKEISGEERGVERRGGRGHQVH). Residues 671–716 (THRLRKLRTPSKCRECNSYVYFQGAECEECSLACHKKCLETLAIQC) form a Phorbol-ester/DAG-type zinc finger. In terms of domain architecture, Rho-GAP spans 730-942 (RDFSETALRS…TLIIFYSTIF (213 aa)). Positions 981 to 1036 (LTPEYQIPVFKEPGASTVESDSESDGAEDIPGTWKPQTTRGHLTKEASVTSAEDIP) are disordered. Residues 1015–1031 (KPQTTRGHLTKEASVTS) show a composition bias toward polar residues.

It is found in the cytoplasm. It localises to the cell projection. The protein resides in the ruffle membrane. Contains a GTPase activator for the Rho-type GTPases (RhoGAP) domain that would be able to negatively regulate the actin cytoskeleton as well as cell spreading. However, also contains N-terminally a BAR-domin which is able to play an autoinhibitory effect on this RhoGAP activity. This chain is Rho GTPase-activating protein 45, found in Xenopus laevis (African clawed frog).